The sequence spans 2113 residues: Ninein (2113 aa).

EF-hand domains follow at residues 8–43 and 42–77; these read QHEA…LCLE and LEDV…ILSR. Residue Ser-152 is modified to Phosphoserine. 2 consecutive EF-hand domains span residues 182 to 217 and 219 to 252; these read WIEE…YGLQ and VDGA…TGKS. 245–252 is a GTP binding site; sequence GLFKTGKS. Ser-269 carries the post-translational modification Phosphoserine. Position 300–304 (300–304) interacts with GTP; the sequence is DGMGQ. The EF-hand 5 domain occupies 317–352; sequence EGIENSQEILKALDFSLDGNINLTELTLALENELLV. A coiled-coil region spans residues 358–570; that stretch reads HQAALASFKA…YQAQGRVLRL (213 aa). 420–423 contributes to the GTP binding site; it reads RKLD. The segment at 578–599 is disordered; sequence EELDGHSGGIEPDQGPGSEECN. 4 coiled-coil regions span residues 620 to 926, 958 to 1008, 1175 to 1323, and 1425 to 1806; these read RDLC…ESQH, EQLA…STEI, EDTR…MEKV, and AALL…IDKD. The interval 798 to 1495 is important for interaction with CEP170; the sequence is EMETECNRRV…QDLQITCGEM (698 aa). Phosphoserine occurs at positions 1540 and 1826. 2 coiled-coil regions span residues 1852-1910 and 1971-2093; these read VQNT…KEQS and REQF…IASL. Disordered stretches follow at residues 1899–1922 and 1988–2008; these read KREC…MGSL and SQHL…PQGN. Over residues 1988–1999 the composition is skewed to basic and acidic residues; that stretch reads SQHLQEELENRT.

Homooligomer. Interacts with GSK3B/GSK3-beta via its C-terminal domain. Interacts with C14ORF166, such interaction may prevent its phosphorylation by GSK3B. Interacts with AUNIP (via N-terminus). Identified in a complex with AUNIP and AURKA. Interacts with CCDC120. Interacts (via C-terminus) with CEP250. Interacts with CEP170. Interacts (via N-terminus) with the gamma-tubulin ring complex component TUBGCP3. Interacts with gamma-tubulin. Isoform 4 does not interact with CEP170 or CEP250. In terms of processing, phosphorylated by AURKA/Aurora kinase A and PKA kinases but not CK2 or AURKB/Aurora kinase B. As to expression, widely expressed. Highly expressed in spleen, bone marrow and skin. Weakly expressed in liver and small intestine. Expressed in brain.

Its subcellular location is the cytoplasm. It localises to the cytoskeleton. It is found in the microtubule organizing center. The protein localises to the centrosome. The protein resides in the centriole. Centrosomal protein required for the positioning and anchorage of the microtubule minus-end in epithelial cells. May also act as a centrosome maturation factor. May play a role in microtubule nucleation, by recruiting the gamma-tubulin ring complex to the centrosome. Overexpression does not perturb nucleation or elongation of microtubules but suppresses release of microtubules. Required for centriole organization and microtubule anchoring at the mother centriole. This chain is Ninein, found in Mus musculus (Mouse).